We begin with the raw amino-acid sequence, 440 residues long: 26S proteasome regulatory subunit 4 (440 aa).

Gly residues predominate over residues 1-13 (MGQSQSGGHGPGG). The interval 1–49 (MGQSQSGGHGPGGGKKDDKDKKKKYEPPVPTRVGKKKKKTKGPDAASKL) is disordered. A lipid anchor (N-myristoyl glycine) is attached at G2. S4 is subject to Phosphoserine. Residues 14–26 (GKKDDKDKKKKYE) show a composition bias toward basic and acidic residues. T53 is modified (phosphothreonine). The disordered stretch occupies residues 84–104 (QMKPLEEKQEEERSKVDDLRG). The segment covering 86–103 (KPLEEKQEEERSKVDDLR) has biased composition (basic and acidic residues). 226 to 233 (GPPGTGKT) contributes to the ATP binding site. A Glycyl lysine isopeptide (Lys-Gly) (interchain with G-Cter in ubiquitin) cross-link involves residue K237. K258 is subject to N6-acetyllysine. At T434 the chain carries Phosphothreonine. The residue at position 439 (Y439) is a Phosphotyrosine.

It belongs to the AAA ATPase family. Component of the 19S proteasome regulatory particle complex. The 26S proteasome consists of a 20S core particle (CP) and two 19S regulatory subunits (RP). The regulatory particle is made of a lid composed of 9 subunits, a base containing 6 ATPases including PSMC1 and few additional components. Interacts with SCA7. Interacts with NGLY1. Interacts with PAAF1.

Its subcellular location is the cytoplasm. It is found in the nucleus. The protein resides in the membrane. Functionally, component of the 26S proteasome, a multiprotein complex involved in the ATP-dependent degradation of ubiquitinated proteins. This complex plays a key role in the maintenance of protein homeostasis by removing misfolded or damaged proteins, which could impair cellular functions, and by removing proteins whose functions are no longer required. Therefore, the proteasome participates in numerous cellular processes, including cell cycle progression, apoptosis, or DNA damage repair. PSMC1 belongs to the heterohexameric ring of AAA (ATPases associated with diverse cellular activities) proteins that unfolds ubiquitinated target proteins that are concurrently translocated into a proteolytic chamber and degraded into peptides. The chain is 26S proteasome regulatory subunit 4 (PSMC1) from Homo sapiens (Human).